The chain runs to 630 residues: Kelch-like protein 14 (630 aa).

The BTB domain occupies 33–153 (CDVTLTAQGQ…LYTANVTLSL (121 aa)). The disordered stretch occupies residues 69–117 (GGGVGGQDGLGAPKDQQQQQQPQQQPPQQQQPPPQEEPGTPSSSPDDKL). The span at 84–96 (QQQQQQPQQQPPQ) shows a compositional bias: low complexity. The 70-residue stretch at 212–281 (VEDVLLLNFE…PAPELVERVQ (70 aa)) folds into the BACK domain. Kelch repeat units lie at residues 325 to 374 (MLLL…EVEN), 375 to 426 (FLFV…RLDK), 427 to 473 (HLYV…VHNG), 475 to 520 (IYIS…VMND), 522 to 572 (LYAI…VLDD), and 574 to 622 (IYLV…TVIL).

In terms of assembly, interacts with TOR1A. As to expression, expressed in the brain, primarily in neurons. In the cerebral cortex, mostly expressed in layers I and II (at protein level). Also observed in some neurons of the corpus striatum (at protein level). Expressed at high levels in the hippocampus, including in pyramidal cells of the CA1 and CA3 layers (at protein level). In the cerebellum, expression in Purkinje cells is higher than in granular cells (at protein level). Also detected in the medial septum, ventral pallidum, thalamus, hypothalamus, amygdala, inferior colliculi, locus caeruleus, peripyramidal nucleus, raphe nucleus, reticular formation, spinal trigeminal nucleus, and vestibular nuclei (at protein level). Low expression, if any, in glial cells (at protein level). Not observed in the corpus callosum.

It is found in the cytoplasm. It localises to the cytosol. The protein resides in the endoplasmic reticulum membrane. This chain is Kelch-like protein 14 (Klhl14), found in Mus musculus (Mouse).